The following is a 1003-amino-acid chain: Translation initiation factor IF-2 (1003 aa).

Composition is skewed to basic and acidic residues over residues glutamate 61–lysine 74, proline 139–glutamate 169, leucine 180–proline 206, valine 219–serine 229, and serine 252–serine 290. Disordered regions lie at residues glutamate 61–glycine 81 and proline 135–phenylalanine 362. Over residues asparagine 315–asparagine 350 the composition is skewed to low complexity. A tr-type G domain is found at proline 502–lysine 672. The tract at residues glycine 511 to threonine 518 is G1. GTP is bound at residue glycine 511–threonine 518. Residues glycine 536–histidine 540 are G2. The G3 stretch occupies residues aspartate 558 to glycine 561. GTP-binding positions include aspartate 558 to histidine 562 and asparagine 612 to aspartate 615. Residues asparagine 612–aspartate 615 form a G4 region. Positions serine 648–lysine 650 are G5.

Belongs to the TRAFAC class translation factor GTPase superfamily. Classic translation factor GTPase family. IF-2 subfamily.

The protein resides in the cytoplasm. Functionally, one of the essential components for the initiation of protein synthesis. Protects formylmethionyl-tRNA from spontaneous hydrolysis and promotes its binding to the 30S ribosomal subunits. Also involved in the hydrolysis of GTP during the formation of the 70S ribosomal complex. The chain is Translation initiation factor IF-2 from Phocaeicola vulgatus (strain ATCC 8482 / DSM 1447 / JCM 5826 / CCUG 4940 / NBRC 14291 / NCTC 11154) (Bacteroides vulgatus).